The following is a 212-amino-acid chain: MSSKYIVIEGLEGAGKTTARNLVVETLKSLGVTDMTFTREPGGTVLAEKLRSLVLDIKSVGDEVITDNAEVLLFYAARVQLVETVIKPALARGEWVIGDRHDLSTQAYQGGGRGIDRQLLATLRQAVLGDFAPDLTLYLDVDPRIGLERARARGELDRIEQESLDFFNRTRARYLELAAADPRIITIDACQPLEAVSHDIRATVTRWVQEQQ.

10 to 17 (GLEGAGKT) contributes to the ATP binding site.

This sequence belongs to the thymidylate kinase family.

The enzyme catalyses dTMP + ATP = dTDP + ADP. In terms of biological role, phosphorylation of dTMP to form dTDP in both de novo and salvage pathways of dTTP synthesis. The sequence is that of Thymidylate kinase from Cronobacter sakazakii (strain ATCC BAA-894) (Enterobacter sakazakii).